The following is a 227-amino-acid chain: Cytidylate kinase (227 aa).

12-20 (GPSGAGKGT) is a binding site for ATP.

This sequence belongs to the cytidylate kinase family. Type 1 subfamily.

It is found in the cytoplasm. The catalysed reaction is CMP + ATP = CDP + ADP. It catalyses the reaction dCMP + ATP = dCDP + ADP. This Salmonella typhimurium (strain LT2 / SGSC1412 / ATCC 700720) protein is Cytidylate kinase.